The sequence spans 210 residues: 7-carboxy-7-deazaguanine synthase (210 aa).

Substrate contacts are provided by residues 12–14 and R27; that span reads LQG. The Radical SAM core domain maps to 18 to 210; the sequence is NAGRPAVFCR…MQTHKYLNIP (193 aa). Positions 31, 46, and 49 each coordinate [4Fe-4S] cluster. 48 to 50 is an S-adenosyl-L-methionine binding site; that stretch reads FCD. T51 is a binding site for Mg(2+). Residue T90 participates in substrate binding. Residues G92, 133-135, and 173-176 contribute to the S-adenosyl-L-methionine site; these read SPK and QPMD. A substrate-binding site is contributed by P210.

It belongs to the radical SAM superfamily. 7-carboxy-7-deazaguanine synthase family. Homodimer. [4Fe-4S] cluster serves as cofactor. Requires S-adenosyl-L-methionine as cofactor. It depends on Mg(2+) as a cofactor.

The enzyme catalyses 6-carboxy-5,6,7,8-tetrahydropterin + H(+) = 7-carboxy-7-deazaguanine + NH4(+). It functions in the pathway purine metabolism; 7-cyano-7-deazaguanine biosynthesis. Functionally, catalyzes the complex heterocyclic radical-mediated conversion of 6-carboxy-5,6,7,8-tetrahydropterin (CPH4) to 7-carboxy-7-deazaguanine (CDG), a step common to the biosynthetic pathways of all 7-deazapurine-containing compounds. This is 7-carboxy-7-deazaguanine synthase from Burkholderia multivorans (strain ATCC 17616 / 249).